Here is a 246-residue protein sequence, read N- to C-terminus: DNA repair protein RecO (246 aa).

It belongs to the RecO family.

Its function is as follows. Involved in DNA repair and RecF pathway recombination. This Bifidobacterium adolescentis (strain ATCC 15703 / DSM 20083 / NCTC 11814 / E194a) protein is DNA repair protein RecO.